Here is a 104-residue protein sequence, read N- to C-terminus: U20-lycotoxin-Ls1d (104 aa).

Positions 1–30 (MFSTSDQVSKMNSRILSALLILGIATCVIA) are cleaved as a signal peptide. Residues 31-76 (GGFCPKSRHPQCNLSYKINDCCAQSDCRVGSVCCVEGCGNVCRAES) enclose the WAP domain. 5 cysteine pairs are disulfide-bonded: Cys-34/Cys-64, Cys-42/Cys-68, Cys-51/Cys-63, Cys-52/Cys-90, and Cys-57/Cys-72.

This sequence belongs to the venom protein 11 family. 02 (wap-2) subfamily. In terms of processing, contains 5 disulfide bonds. As to expression, expressed by the venom gland.

It localises to the secreted. Its function is as follows. Has antibacterial activity. This chain is U20-lycotoxin-Ls1d, found in Lycosa singoriensis (Wolf spider).